The sequence spans 494 residues: UDP-N-acetylmuramate--L-alanine ligase (494 aa).

ATP is bound at residue 140–146 (GTHGKTT).

Belongs to the MurCDEF family.

The protein resides in the cytoplasm. It carries out the reaction UDP-N-acetyl-alpha-D-muramate + L-alanine + ATP = UDP-N-acetyl-alpha-D-muramoyl-L-alanine + ADP + phosphate + H(+). It functions in the pathway cell wall biogenesis; peptidoglycan biosynthesis. In terms of biological role, cell wall formation. This is UDP-N-acetylmuramate--L-alanine ligase from Trichormus variabilis (strain ATCC 29413 / PCC 7937) (Anabaena variabilis).